A 65-amino-acid polypeptide reads, in one-letter code: MPKIKTLRGAAKRFKKTASGGFKRKQSHLRHILTKKTTKRKRHLRHKSMVAKADQVLVVACLPYA.

The interval 1–26 (MPKIKTLRGAAKRFKKTASGGFKRKQ) is disordered. Basic residues predominate over residues 10-26 (AAKRFKKTASGGFKRKQ).

The protein belongs to the bacterial ribosomal protein bL35 family.

This is Large ribosomal subunit protein bL35 from Histophilus somni (strain 2336) (Haemophilus somnus).